A 361-amino-acid chain; its full sequence is Mitochondrial fission regulator 2 (361 aa).

Ser-137 is subject to Phosphoserine. Disordered stretches follow at residues 191–286 (FIDL…VPNM) and 298–322 (LRPV…EWDP). Residues 219–231 (VLPPPPPPPPPPQ) are compositionally biased toward pro residues. Positions 232–244 (FSLQPPSSLPMQP) are enriched in low complexity. A compositionally biased stretch (basic and acidic residues) spans 250–282 (HDIDSLATEMERQLSGVKKTDDSHHSKSQRLRD). Ser-304 and Ser-340 each carry phosphoserine.

The protein belongs to the MTFR1 family. Expressed predominantly in testis (at protein level). Expressed to a lower extent in spleen.

The protein localises to the mitochondrion. Functionally, may play a role in mitochondrial aerobic respiration essentially in the testis. Can also promote mitochondrial fission. The sequence is that of Mitochondrial fission regulator 2 (Mtfr2) from Mus musculus (Mouse).